The chain runs to 326 residues: G-protein coupled receptor 171 (326 aa).

The Extracellular segment spans residues 1–19; it reads MTNSSMFCPIYRDLEPFTY. Residues 20-40 traverse the membrane as a helical segment; it reads FFYLVYLIGIIGSCFATWAFI. Topologically, residues 41–48 are cytoplasmic; that stretch reads QKSTNHRC. Residues 49–69 form a helical membrane-spanning segment; that stretch reads VSIYLINLLTADFLLTLALPV. Over 70–89 the chain is Extracellular; that stretch reads KIVVDLGVAPWKLRIFHCQV. Cys87 and Cys165 are joined by a disulfide. The helical transmembrane segment at 90-110 threads the bilayer; sequence TACLIYINMYLSIIFLAFVSI. Residues 111 to 133 are Cytoplasmic-facing; sequence DRCLQLVHSCKIYRIQEPGFAKM. The helical transmembrane segment at 134 to 154 threads the bilayer; sequence ISAVVWLMVLLIMVPNMVIPI. The Extracellular portion of the chain corresponds to 155–182; the sequence is KNIKEKSNVGCMEFKREFGKNWHLLTNF. The chain crosses the membrane as a helical span at residues 183–203; it reads ICVAIFLNFSAIILISNFLVI. Residues 204-221 lie on the Cytoplasmic side of the membrane; sequence RQLYRNRDNANYPSVKSA. The chain crosses the membrane as a helical span at residues 222–242; the sequence is LLNILLVTASYIICFVPYHAV. Topologically, residues 243–268 are extracellular; it reads RIPYTLSQTEVISDCSTRIALFKAKE. Residues 269–289 form a helical membrane-spanning segment; the sequence is ATLLLAVSNLCFDPILYYHLS. Over 290-326 the chain is Cytoplasmic; that stretch reads KAFRLKVTETFASPQKMKAREEKPRRENDVQSTGSAC. The segment at 305-326 is disordered; sequence KMKAREEKPRRENDVQSTGSAC. The span at 307 to 318 shows a compositional bias: basic and acidic residues; the sequence is KAREEKPRREND.

It belongs to the G-protein coupled receptor 1 family.

It localises to the cell membrane. Functionally, G-protein coupled receptor for Big LEN, a 16-amino acid neuropeptide produced from the precursor protein, proSAAS (encoded by PCSK1N). Acts through a G(i)-alpha-mediated pathway in response to Big LEN. Big LEN-GPR171 system plays an important role in regulating feeding and metabolism. Also plays a role in modulating fear and anxiety-like behaviors in the basolateral amygdala. Big LEN-GPR171 modulates the mu-type opioid receptor signaling and antinociception. Acts as a negative regulator T cell function. The sequence is that of G-protein coupled receptor 171 from Rattus norvegicus (Rat).